The chain runs to 334 residues: Anthranilate phosphoribosyltransferase (334 aa).

5-phospho-alpha-D-ribose 1-diphosphate is bound by residues glycine 79, 82–83 (GD), serine 87, 89–92 (NIST), 107–115 (KAGNRSISS), and serine 119. Residue glycine 79 participates in anthranilate binding. Mg(2+) is bound at residue serine 91. Asparagine 110 provides a ligand contact to anthranilate. Arginine 165 is an anthranilate binding site. Mg(2+) is bound by residues aspartate 224 and glutamate 225.

The protein belongs to the anthranilate phosphoribosyltransferase family. In terms of assembly, homodimer. Mg(2+) is required as a cofactor.

The catalysed reaction is N-(5-phospho-beta-D-ribosyl)anthranilate + diphosphate = 5-phospho-alpha-D-ribose 1-diphosphate + anthranilate. The protein operates within amino-acid biosynthesis; L-tryptophan biosynthesis; L-tryptophan from chorismate: step 2/5. Its function is as follows. Catalyzes the transfer of the phosphoribosyl group of 5-phosphorylribose-1-pyrophosphate (PRPP) to anthranilate to yield N-(5'-phosphoribosyl)-anthranilate (PRA). The polypeptide is Anthranilate phosphoribosyltransferase (Streptococcus thermophilus (strain ATCC BAA-250 / LMG 18311)).